Consider the following 1392-residue polypeptide: FERM and PDZ domain-containing protein 2 (1392 aa).

Residues 15–197 (VTLASALQVR…SEVERRVVEE (183 aa)) form the KIND domain. Positions 211-246 (SRLHQADGESPGAPASDALQPRRVSERSAETQSSLE) are disordered. An FERM domain is found at 342-642 (CVVLLNGRCL…WFNAQTGSKH (301 aa)). One can recognise a PDZ 1 domain in the interval 775–861 (GLFGEPNQDI…MAVRMIQNSP (87 aa)). A disordered region spans residues 903–930 (GRQSPHIHDQDRSVRGTEMAQGAGSCPP). Residues 908-917 (HIHDQDRSVR) are compositionally biased toward basic and acidic residues. An interaction with GRIN2A and GRIN2B region spans residues 937 to 1027 (TGEIYFVELV…VARLVLERRG (91 aa)). PDZ domains are found at residues 950 to 1035 (GTLG…PQCP) and 1079 to 1167 (RGLG…PEME). The tract at residues 1186–1236 (CAGSEQSPSLDQEDNWRDSTSLDAGEGLSPGPESSYKDVRQVKGDREKERP) is disordered. The span at 1220–1236 (SYKDVRQVKGDREKERP) shows a compositional bias: basic and acidic residues.

As to quaternary structure, interacts (via the second PDZ domain) with CTNND2 (via the extreme C-terminus). Interacts (via the second PDZ domain) with PKP4 (via the extreme C-terminus); the interaction directs FRMPD2 to the basolateral membranes. Interacts (via the second PDZ domain) with ARVCF (via the extreme C-terminus). Interacts (via the second PDZ domain) with NMDAR subunits GRIN2A/GLUN2A and GRIN2B/GLUN2B (via the extreme C-terminus); the interaction is direct and is likely to promote NMDAR-mediated neural signal transmission. Binds GRIN2A with lower affinity than GRIN2B. Interacts (via the third PDZ domain) with LRIT1 (via the extreme C-terminus); the interaction leads to their colocalization in photoreceptor synapses. Interacts with NOD2; the interaction is likely to trigger NOD2-mediated nuclear factor kappaB activation.

It localises to the cytoplasm. The protein resides in the postsynaptic density. It is found in the basolateral cell membrane. The protein localises to the cell junction. Its subcellular location is the tight junction. Functionally, functions as a scaffold protein and likely plays a role in N-methyl-D-aspartic acid receptor (NMDAR)-mediated synaptic excitatory transmission. May be involved in synapse formation in cone photoreceptor cells. May play a role in the regulation of tight junction formation. Binds phosphatidylinositol 3,4-bisphosphate (PtdIns(3,4)P2). May pNF-kappa-Blay a role in the regulation of NOD2-mediated NF-kappa-B activation in immune response. This is FERM and PDZ domain-containing protein 2 from Mus musculus (Mouse).